The following is a 357-amino-acid chain: Fructose-1,6-bisphosphatase class 1 2 (357 aa).

Mg(2+) is bound by residues glutamate 90, aspartate 112, leucine 114, and aspartate 115. Substrate-binding positions include 115-118 and asparagine 206; that span reads DGSS. Glutamate 278 is a binding site for Mg(2+).

The protein belongs to the FBPase class 1 family. As to quaternary structure, homotetramer. Mg(2+) is required as a cofactor.

It localises to the cytoplasm. The enzyme catalyses beta-D-fructose 1,6-bisphosphate + H2O = beta-D-fructose 6-phosphate + phosphate. The protein operates within carbohydrate biosynthesis; gluconeogenesis. This is Fructose-1,6-bisphosphatase class 1 2 from Dechloromonas aromatica (strain RCB).